Here is a 149-residue protein sequence, read N- to C-terminus: 3-dehydroquinate dehydratase (149 aa).

Catalysis depends on Tyr26, which acts as the Proton acceptor. Asn77, His83, and Asp90 together coordinate substrate. The Proton donor role is filled by His103. Substrate-binding positions include 104–105 (LS) and Arg114.

It belongs to the type-II 3-dehydroquinase family. In terms of assembly, homododecamer.

It catalyses the reaction 3-dehydroquinate = 3-dehydroshikimate + H2O. It functions in the pathway metabolic intermediate biosynthesis; chorismate biosynthesis; chorismate from D-erythrose 4-phosphate and phosphoenolpyruvate: step 3/7. In terms of biological role, catalyzes a trans-dehydration via an enolate intermediate. In Haemophilus influenzae (strain ATCC 51907 / DSM 11121 / KW20 / Rd), this protein is 3-dehydroquinate dehydratase (aroQ).